The following is a 374-amino-acid chain: (R)-phenyllactyl-CoA dehydratase beta subunit (374 aa).

It belongs to the FldB/FldC dehydratase alpha/beta subunit family. Part of the heterotrimeric phenyllactate dehydratase complex FldABC, composed of (R)-phenyllactate CoA-transferase (FldA) and a heterodimeric (R)-phenyllactyl-CoA dehydratase (FldB and FldC). The cofactor is [4Fe-4S] cluster. It depends on No flavin could be detected in the FldABC complex, and the addition of FAD, FMN or riboflavin to the dehydratase do not increase enzymatic activity. as a cofactor.

It catalyses the reaction (R)-3-phenyllactoyl-CoA = (E)-cinnamoyl-CoA + H2O. The enzyme catalyses (R)-3-(4-hydroxyphenyl)lactoyl-CoA = (E)-4-coumaroyl-CoA + H2O. The catalysed reaction is (R)-3-(indol-3-yl)lactoyl-CoA = (E)-3-(indol-3-yl)acryloyl-CoA + H2O. The protein operates within amino-acid degradation; L-phenylalanine degradation. Component of the phenyllactate dehydratase complex FldABC that is involved in the fermentation of L-phenylalanine via a Stickland reaction. This complex catalyzes the reversible syn-dehydration of (R)-phenyllactate to (E)-cinnamate in two steps, a CoA-transfer from cinnamoyl-CoA to phenyllactate, catalyzed by FldA, followed by the dehydration of phenyllactyl-CoA to cinnamoyl-CoA, catalyzed by FldB and FldC. Requires the activator FldI to initiate catalysis. The protein is (R)-phenyllactyl-CoA dehydratase beta subunit of Clostridium sporogenes.